Here is a 567-residue protein sequence, read N- to C-terminus: Proline--tRNA ligase (567 aa).

This sequence belongs to the class-II aminoacyl-tRNA synthetase family. ProS type 1 subfamily. As to quaternary structure, homodimer.

The protein resides in the cytoplasm. The enzyme catalyses tRNA(Pro) + L-proline + ATP = L-prolyl-tRNA(Pro) + AMP + diphosphate. Catalyzes the attachment of proline to tRNA(Pro) in a two-step reaction: proline is first activated by ATP to form Pro-AMP and then transferred to the acceptor end of tRNA(Pro). As ProRS can inadvertently accommodate and process non-cognate amino acids such as alanine and cysteine, to avoid such errors it has two additional distinct editing activities against alanine. One activity is designated as 'pretransfer' editing and involves the tRNA(Pro)-independent hydrolysis of activated Ala-AMP. The other activity is designated 'posttransfer' editing and involves deacylation of mischarged Ala-tRNA(Pro). The misacylated Cys-tRNA(Pro) is not edited by ProRS. The protein is Proline--tRNA ligase of Streptomyces coelicolor (strain ATCC BAA-471 / A3(2) / M145).